Reading from the N-terminus, the 96-residue chain is Mitochondrial import inner membrane translocase subunit Tim13-B (96 aa).

The Twin CX3C motif signature appears at 47–70 (CFRKCIGKPGGSLDNSEQKCVAMC). 2 disulfide bridges follow: cysteine 47/cysteine 70 and cysteine 51/cysteine 66.

The protein belongs to the small Tim family. In terms of assembly, heterohexamer; composed of 3 copies of TIMM8 (TIMM8A or TIMM8B) and 3 copies of TIMM13, named soluble 70 kDa complex. Associates with the TIM22 complex, whose core is composed of TIMM22.

Its subcellular location is the mitochondrion inner membrane. In terms of biological role, mitochondrial intermembrane chaperone that participates in the import and insertion of some multi-pass transmembrane proteins into the mitochondrial inner membrane. Also required for the transfer of beta-barrel precursors from the TOM complex to the sorting and assembly machinery (SAM complex) of the outer membrane. Acts as a chaperone-like protein that protects the hydrophobic precursors from aggregation and guide them through the mitochondrial intermembrane space. The TIMM8-TIMM13 complex mediates the import of some proteins while the predominant TIMM9-TIMM10 70 kDa complex mediates the import of much more proteins. This is Mitochondrial import inner membrane translocase subunit Tim13-B (timm13-b) from Xenopus laevis (African clawed frog).